Reading from the N-terminus, the 440-residue chain is Xylose isomerase (440 aa).

Catalysis depends on residues H100 and D103. Mg(2+) contacts are provided by E231, E267, H270, D295, D306, D308, and D338.

This sequence belongs to the xylose isomerase family. In terms of assembly, homotetramer. Requires Mg(2+) as cofactor.

The protein resides in the cytoplasm. The catalysed reaction is alpha-D-xylose = alpha-D-xylulofuranose. The protein is Xylose isomerase of Paraburkholderia xenovorans (strain LB400).